The chain runs to 1274 residues: Clustered mitochondria protein homolog (1274 aa).

Residues 1 to 53 form a disordered region; the sequence is MAQTNGELEHSKGMSSPAVRISQAQKSTKLTVDPESPEQVANGTHAEGEQPEE. TPR repeat units lie at residues 293-326, 510-543, and 628-661; these read SPSF…PNNP, DYGG…KKHP, and AKEA…ERVD. The Clu domain occupies 342-586; that stretch reads DITRSQENYL…RVTPLDVMWQ (245 aa). 2 disordered regions span residues 631–655 and 893–925; these read AAKK…EEAL and VSNG…ARAA. TPR repeat units follow at residues 998-1031, 1040-1073, 1082-1115, and 1124-1157; these read AKLY…TERT, ILSY…WKII, ITTM…CESL, and ATIL…FLQQ. Positions 1197-1274 are disordered; the sequence is INMTPRTLGT…KLRGSKKSSA (78 aa). The segment covering 1200-1217 has biased composition (polar residues); that stretch reads TPRTLGTRVQPQVGQTAP.

This sequence belongs to the CLU family. May associate with the eukaryotic translation initiation factor 3 (eIF-3) complex.

The protein resides in the cytoplasm. In terms of biological role, mRNA-binding protein involved in proper cytoplasmic distribution of mitochondria. This chain is Clustered mitochondria protein homolog, found in Aspergillus terreus (strain NIH 2624 / FGSC A1156).